The following is a 158-amino-acid chain: NAD(P)H-quinone oxidoreductase subunit J, chloroplastic (158 aa).

Belongs to the complex I 30 kDa subunit family. In terms of assembly, NDH is composed of at least 16 different subunits, 5 of which are encoded in the nucleus.

The protein resides in the plastid. It localises to the chloroplast thylakoid membrane. The catalysed reaction is a plastoquinone + NADH + (n+1) H(+)(in) = a plastoquinol + NAD(+) + n H(+)(out). It catalyses the reaction a plastoquinone + NADPH + (n+1) H(+)(in) = a plastoquinol + NADP(+) + n H(+)(out). Functionally, NDH shuttles electrons from NAD(P)H:plastoquinone, via FMN and iron-sulfur (Fe-S) centers, to quinones in the photosynthetic chain and possibly in a chloroplast respiratory chain. The immediate electron acceptor for the enzyme in this species is believed to be plastoquinone. Couples the redox reaction to proton translocation, and thus conserves the redox energy in a proton gradient. The protein is NAD(P)H-quinone oxidoreductase subunit J, chloroplastic of Chloranthus spicatus (Chulantree).